We begin with the raw amino-acid sequence, 343 residues long: Anthranilate phosphoribosyltransferase (343 aa).

5-phospho-alpha-D-ribose 1-diphosphate contacts are provided by residues glycine 84, 87-88, threonine 92, 94-97, 112-120, and serine 124; these read GD, NIST, and KHGNRSVSS. Residue glycine 84 coordinates anthranilate. Residue serine 96 participates in Mg(2+) binding. Asparagine 115 contributes to the anthranilate binding site. Residue arginine 170 coordinates anthranilate. Positions 229 and 230 each coordinate Mg(2+).

It belongs to the anthranilate phosphoribosyltransferase family. Homodimer. The cofactor is Mg(2+).

The enzyme catalyses N-(5-phospho-beta-D-ribosyl)anthranilate + diphosphate = 5-phospho-alpha-D-ribose 1-diphosphate + anthranilate. It participates in amino-acid biosynthesis; L-tryptophan biosynthesis; L-tryptophan from chorismate: step 2/5. Its function is as follows. Catalyzes the transfer of the phosphoribosyl group of 5-phosphorylribose-1-pyrophosphate (PRPP) to anthranilate to yield N-(5'-phosphoribosyl)-anthranilate (PRA). In Stenotrophomonas maltophilia (strain R551-3), this protein is Anthranilate phosphoribosyltransferase.